A 1523-amino-acid chain; its full sequence is Rho GTPase-activating protein gacHH (1523 aa).

3 Kelch repeats span residues 30-76, 83-133, and 135-184; these read DIVI…YGHS, KMFV…LIYD, and YILI…DISP. 2 stretches are compositionally biased toward polar residues: residues 161–173 and 184–194; these read NSWT…SSTG and PRSSTTTPTHQ. The tract at residues 161–256 is disordered; sequence NSWTKPSSNS…GGSPMTTPPT (96 aa). A compositionally biased stretch (low complexity) spans 195 to 211; the sequence is SVNGSNSNSSSSSRVRS. Residues 212–221 show a composition bias toward polar residues; sequence ATISSHNNSP. Residues 227–244 show a composition bias toward low complexity; the sequence is NNNNNNNNNSNNSNNSNN. Kelch repeat units follow at residues 335–384, 386–441, and 443–496; these read KAFI…AIGS, LFIF…PISS, and ILII…PITS. Disordered regions lie at residues 510–569, 609–631, and 647–671; these read LPHL…DNIN, QSID…VSND, and NKNN…NSGS. Residues 615–626 show a composition bias toward gly residues; sequence GGSGGGSGGGNG. The stretch at 690–729 forms a coiled coil; sequence CIKKYNSLKDSYLELKQKYQEEREKRLELEKELERYRLSS. A disordered region spans residues 748-786; the sequence is NINSNNSTTTTTTTTTTTTTPIPLSTSNNNNNNNNNSTL. The stretch at 812–840 forms a coiled coil; the sequence is YEKRVKWKENTEKEANQQLEVIKSKIDLF. Disordered stretches follow at residues 861–881, 905–927, 963–991, 1006–1096, and 1143–1194; these read SENI…QNPQ, LTPR…PIPL, TPQK…SKST, SGHF…RLGK, and NGAN…SERI. The span at 870-881 shows a compositional bias: low complexity; sequence QQQQQQQQQNPQ. The segment covering 905–915 has biased composition (basic and acidic residues); the sequence is LTPRKSRENSV. Composition is skewed to low complexity over residues 971–981, 1012–1030, 1043–1079, and 1143–1153; these read PQQQQQQQPPQ, SSSN…FSNN, QHQQ…LQTQ, and NGANNLGGLVL. Positions 1151 to 1228 form a coiled coil; that stretch reads LVLTSDKEKE…KKHKKIKGLF (78 aa). A compositionally biased stretch (basic and acidic residues) spans 1155-1194; that stretch reads SDKEKEKLEKEREKSERIEREKQEKEREKLEKEREKSERI. Residues 1233 to 1411 enclose the Rho-GAP domain; it reads SNKESLPFRR…TFIEDFHYIF (179 aa). The segment at 1425-1482 is disordered; sequence DDDYDSSSFGSNNTPSSHSPHSSSPTLNPAVTTTTTTTTTTNTTTTTNTTTTPTSATI. Over residues 1430–1476 the composition is skewed to low complexity; the sequence is SSSFGSNNTPSSHSPHSSSPTLNPAVTTTTTTTTTTNTTTTTNTTTT.

It is found in the cytoplasm. In terms of biological role, rho GTPase-activating protein involved in the signal transduction pathway. The chain is Rho GTPase-activating protein gacHH (gacHH) from Dictyostelium discoideum (Social amoeba).